The primary structure comprises 186 residues: Dehydrin Rab18 (186 aa).

Residues 1–186 (MASYQNRPGG…IKEKLPGGGR (186 aa)) form a disordered region. The span at 30–85 (PMGGGGYGTGGGGGATGGQGYGTGGQGYGSGGQGYGTGGQGYGTGTGTEGFGTGGG) shows a compositional bias: gly residues. The span at 89-98 (HGQEQLHKES) shows a compositional bias: basic and acidic residues. The span at 105–116 (MLHRSGSGSSSS) shows a compositional bias: low complexity. A compositionally biased stretch (basic and acidic residues) spans 133–144 (KIKEKLPGHHDQ). Over residues 152-164 (GGMGSGYDAGGYG) the composition is skewed to gly residues. Over residues 165 to 186 (GEHHEKKGMMDKIKEKLPGGGR) the composition is skewed to basic and acidic residues.

It belongs to the plant dehydrin family.

This Arabidopsis thaliana (Mouse-ear cress) protein is Dehydrin Rab18 (RAB18).